The sequence spans 146 residues: Aspartate carbamoyltransferase regulatory chain (146 aa).

Zn(2+) is bound by residues C102, C107, C131, and C134.

Belongs to the PyrI family. Contains catalytic and regulatory chains. Zn(2+) serves as cofactor.

Functionally, involved in allosteric regulation of aspartate carbamoyltransferase. The sequence is that of Aspartate carbamoyltransferase regulatory chain from Clostridium acetobutylicum (strain ATCC 824 / DSM 792 / JCM 1419 / IAM 19013 / LMG 5710 / NBRC 13948 / NRRL B-527 / VKM B-1787 / 2291 / W).